Here is a 611-residue protein sequence, read N- to C-terminus: Dihydroxy-acid dehydratase (611 aa).

Asp81 provides a ligand contact to Mg(2+). Position 122 (Cys122) interacts with [2Fe-2S] cluster. Asp123 and Lys124 together coordinate Mg(2+). Lys124 is modified (N6-carboxylysine). Residue Cys195 coordinates [2Fe-2S] cluster. A Mg(2+)-binding site is contributed by Glu491. Ser517 acts as the Proton acceptor in catalysis.

The protein belongs to the IlvD/Edd family. As to quaternary structure, homodimer. The cofactor is [2Fe-2S] cluster. It depends on Mg(2+) as a cofactor.

The enzyme catalyses (2R)-2,3-dihydroxy-3-methylbutanoate = 3-methyl-2-oxobutanoate + H2O. It carries out the reaction (2R,3R)-2,3-dihydroxy-3-methylpentanoate = (S)-3-methyl-2-oxopentanoate + H2O. Its pathway is amino-acid biosynthesis; L-isoleucine biosynthesis; L-isoleucine from 2-oxobutanoate: step 3/4. It participates in amino-acid biosynthesis; L-valine biosynthesis; L-valine from pyruvate: step 3/4. Its function is as follows. Functions in the biosynthesis of branched-chain amino acids. Catalyzes the dehydration of (2R,3R)-2,3-dihydroxy-3-methylpentanoate (2,3-dihydroxy-3-methylvalerate) into 2-oxo-3-methylpentanoate (2-oxo-3-methylvalerate) and of (2R)-2,3-dihydroxy-3-methylbutanoate (2,3-dihydroxyisovalerate) into 2-oxo-3-methylbutanoate (2-oxoisovalerate), the penultimate precursor to L-isoleucine and L-valine, respectively. This chain is Dihydroxy-acid dehydratase, found in Histophilus somni (strain 129Pt) (Haemophilus somnus).